Consider the following 1811-residue polypeptide: ADP-ribosylation factor guanine nucleotide-exchange factor sec71 (1811 aa).

2 disordered regions span residues 1–108 (MTDL…TSEA) and 316–336 (INMN…PIPS). Composition is skewed to basic and acidic residues over residues 33–49 (STIK…HDSI), 57–73 (KSIE…KDIE), and 80–91 (PPEDDLDSRSIE). Position 40 is a phosphoserine (Ser40). Polar residues-rich tracts occupy residues 92-108 (SEQT…TSEA) and 316-326 (INMNKSSSNGT). Thr326 carries the post-translational modification Phosphothreonine. Ser332 and Ser353 each carry phosphoserine. Residues 533–537 (NYDCI) carry the HUS box motif. Over residues 643 to 663 (TAKDDETESTSKGEEPQKSKS) the composition is skewed to basic and acidic residues. Positions 643–688 (TAKDDETESTSKGEEPQKSKSEPPSAGINSTSMDNLESSGQALATD) are disordered. The span at 669-688 (GINSTSMDNLESSGQALATD) shows a compositional bias: polar residues. One can recognise an SEC7 domain in the interval 692-880 (QFENLKHRKK…TEVYEEIQKN (189 aa)). The residue at position 741 (Ser741) is a Phosphoserine. A Phosphothreonine modification is found at Thr742. Residue Asp812 participates in Mg(2+) binding. The interval 889–1103 (DPTSNFPEIP…TTKPLRKSLD (215 aa)) is HDS1 domain.

The protein resides in the cytoplasm. Its subcellular location is the golgi apparatus. It localises to the trans-Golgi network. The protein localises to the cytoplasmic vesicle. It is found in the COPI-coated vesicle membrane. The protein resides in the COPII-coated vesicle membrane. Guanine exchange factor that acts as an activator of arf1 at the trans-Golgi net-work and is thus involved in vesicular budding and traffic between compartments of the Golgi apparatus. Activation of Arf (ADP-ribosylation factor) GTPases is essential for vesicle formation via recruitment of cargo adapters and coat proteins necessary for Golgi trafficking. Involved in tunicamycin-induced ER stress response and subsequent apoptosis. In Schizosaccharomyces pombe (strain 972 / ATCC 24843) (Fission yeast), this protein is ADP-ribosylation factor guanine nucleotide-exchange factor sec71.